We begin with the raw amino-acid sequence, 121 residues long: Small ribosomal subunit protein uS13 (121 aa).

Residues 91-121 (HRMSLPVRGQRTRTNARTRRGSRKTVAGRKK) form a disordered region. Positions 100 to 121 (QRTRTNARTRRGSRKTVAGRKK) are enriched in basic residues.

Belongs to the universal ribosomal protein uS13 family. In terms of assembly, part of the 30S ribosomal subunit. Forms a loose heterodimer with protein S19. Forms two bridges to the 50S subunit in the 70S ribosome.

Functionally, located at the top of the head of the 30S subunit, it contacts several helices of the 16S rRNA. In the 70S ribosome it contacts the 23S rRNA (bridge B1a) and protein L5 of the 50S subunit (bridge B1b), connecting the 2 subunits; these bridges are implicated in subunit movement. Contacts the tRNAs in the A and P-sites. The protein is Small ribosomal subunit protein uS13 of Prochlorococcus marinus (strain SARG / CCMP1375 / SS120).